A 159-amino-acid chain; its full sequence is MFRLLVLAACLAISVHAYSDGAPKAACRDLTPQHGAKLQVTKPPYSISGPSHVRSDQKLTLTLGGDEFLGFMIQARDGQNRVVGQFQVVDSVHSQTLDCSGKDDTITHLSAQKGKPLTGITFDWIPPAGYKGNVKFMATVVQTGFVYWVGRVTKDIDVE.

The signal sequence occupies residues 1–17 (MFRLLVLAACLAISVHA). One can recognise a Reelin domain in the interval 18-159 (YSDGAPKAAC…GRVTKDIDVE (142 aa)). The cysteines at positions 27 and 99 are disulfide-linked.

It belongs to the insect defense protein family.

It localises to the secreted. Functionally, may have antimicrobial activity. A late response immune regulated gene that is negatively regulated by spz during the immune response. The chain is Defense protein l(2)34Fc (l(2)34Fc) from Drosophila melanogaster (Fruit fly).